The primary structure comprises 274 residues: MEKYVVMGNPIEHSQSPFIHQLFSKQSGIDYEYGRLLVPLGEFDKVATQFFSQGGRGANVTVPFKEDAFRFVDKLTQRAQACGAVNTILKLDDGTLLGDNTDGQGLILDLARLDFIIPGKILSVLVIGAGGATRGILLPLLNYNCDITLTNRTVEKAQQLAQEFSQFGTIRASAPQNVTDKHYDLIINASSSSMTDDIPPIPDSAYGFKTACYDLYYKAGMTSFLYHALKNGSTRLSDGLGMLVGQAAYAVELWYERVPDINPTINILRENLNK.

Residues 14-16 (SQS) and threonine 61 contribute to the shikimate site. The active-site Proton acceptor is the lysine 65. The shikimate site is built by asparagine 86 and aspartate 102. Residues 128–132 (GAGGA), 151–156 (NRTVEK), and leucine 215 contribute to the NADP(+) site. Tyrosine 217 serves as a coordination point for shikimate. Glycine 239 provides a ligand contact to NADP(+).

The protein belongs to the shikimate dehydrogenase family. Homodimer.

The catalysed reaction is shikimate + NADP(+) = 3-dehydroshikimate + NADPH + H(+). The protein operates within metabolic intermediate biosynthesis; chorismate biosynthesis; chorismate from D-erythrose 4-phosphate and phosphoenolpyruvate: step 4/7. Functionally, involved in the biosynthesis of the chorismate, which leads to the biosynthesis of aromatic amino acids. Catalyzes the reversible NADPH linked reduction of 3-dehydroshikimate (DHSA) to yield shikimate (SA). The protein is Shikimate dehydrogenase (NADP(+)) of Proteus mirabilis (strain HI4320).